Reading from the N-terminus, the 349-residue chain is MDLFDRINKLKEEGLNEIKQAENQKMLDKIRVELMGRKGELTEILHSMKDIAPENRPKVGQEVNQVRDLFQKQLDEAKNNFLQTLIAKKLEEEKIDVTLPGREGHLGSKHPINIILDDLESYFIGMGYEVVQGPEIETDHYVFEMMNLPKDHPARDMQATFYIDEENLLRTQTSGDQARVLEKHDFSKGPLKMVGPGKVYRRDDDDATHSHQFQQMEGLVIDKNVTMSDLKGTLEMIAKHVFGQDRKTRLRPSYFPFTEPSVEMDVSCFNCDGKGCPICKYTGWIEVLGAGMVHPNVLENAGVDSTVYGGFAFGLGLDRFAILKYGISDIRDFYTNDVRFLAQFRKEED.

Glu259 serves as a coordination point for Mg(2+).

Belongs to the class-II aminoacyl-tRNA synthetase family. Phe-tRNA synthetase alpha subunit type 1 subfamily. In terms of assembly, tetramer of two alpha and two beta subunits. Mg(2+) serves as cofactor.

It localises to the cytoplasm. The enzyme catalyses tRNA(Phe) + L-phenylalanine + ATP = L-phenylalanyl-tRNA(Phe) + AMP + diphosphate + H(+). The protein is Phenylalanine--tRNA ligase alpha subunit of Lactobacillus johnsonii (strain CNCM I-12250 / La1 / NCC 533).